Reading from the N-terminus, the 360-residue chain is Alanine racemase (360 aa).

The active-site Proton acceptor; specific for D-alanine is lysine 36. Lysine 36 carries the post-translational modification N6-(pyridoxal phosphate)lysine. Arginine 132 contributes to the substrate binding site. Tyrosine 256 functions as the Proton acceptor; specific for L-alanine in the catalytic mechanism. Methionine 304 contributes to the substrate binding site.

Belongs to the alanine racemase family. Requires pyridoxal 5'-phosphate as cofactor.

The enzyme catalyses L-alanine = D-alanine. It participates in amino-acid biosynthesis; D-alanine biosynthesis; D-alanine from L-alanine: step 1/1. Functionally, catalyzes the interconversion of L-alanine and D-alanine. May also act on other amino acids. This Haemophilus influenzae (strain ATCC 51907 / DSM 11121 / KW20 / Rd) protein is Alanine racemase (alr).